The following is a 392-amino-acid chain: MLRIVLARSSRAMSSASPASASDSDTSVRKIGKALETYLKHSQQHVAMMEKHRAEFETGRRHLAKMMSLDIHELDQEAIDRAILYLFPSGLTDPNARPVMRPPDEILPKFQRFTFDEEGKPEGSRFFTLSPKIYGLLSDIGVKTHSVMKFYDEHVGSRSVNRSDLEPANLSGSQWVTADKLKKKLSEKFSKELYGQVIIAFEHLASLPGSAIEQKFLMEFREPMTASTGSKLFGPAIPEVHVCAVTNRRYAEVTTRCKDTRATVKVTDAGKGKFDIDGLQLHDFRHLQAREILLAPMIVSQSLGRFDVTATTSCISNTLPEAPNKAPLMRSGGMSALPRAVRHGTALCVAALQPEAIEPLRLSGLLTLDPRKNERSKVNQPGARAKWIWKRR.

Positions 8–25 are enriched in low complexity; sequence RSSRAMSSASPASASDSD. The disordered stretch occupies residues 8-27; sequence RSSRAMSSASPASASDSDTS.

This sequence belongs to the universal ribosomal protein uS9 family. Component of the mitochondrial ribosome small subunit (28S) which comprises a 12S rRNA and about 30 distinct proteins.

The protein resides in the mitochondrion. This chain is Small ribosomal subunit protein uS9m (mrps-9), found in Caenorhabditis elegans.